The primary structure comprises 404 residues: CCA-adding enzyme (404 aa).

Positions 27 and 30 each coordinate ATP. Glycine 27 and arginine 30 together coordinate CTP. Mg(2+) contacts are provided by aspartate 40 and aspartate 42. 5 residues coordinate ATP: arginine 111, aspartate 154, arginine 157, arginine 160, and arginine 163. Residues arginine 111, aspartate 154, arginine 157, arginine 160, and arginine 163 each coordinate CTP.

It belongs to the tRNA nucleotidyltransferase/poly(A) polymerase family. Bacterial CCA-adding enzyme type 3 subfamily. In terms of assembly, homodimer. The cofactor is Mg(2+).

It carries out the reaction a tRNA precursor + 2 CTP + ATP = a tRNA with a 3' CCA end + 3 diphosphate. The catalysed reaction is a tRNA with a 3' CCA end + 2 CTP + ATP = a tRNA with a 3' CCACCA end + 3 diphosphate. Its function is as follows. Catalyzes the addition and repair of the essential 3'-terminal CCA sequence in tRNAs without using a nucleic acid template. Adds these three nucleotides in the order of C, C, and A to the tRNA nucleotide-73, using CTP and ATP as substrates and producing inorganic pyrophosphate. tRNA 3'-terminal CCA addition is required both for tRNA processing and repair. Also involved in tRNA surveillance by mediating tandem CCA addition to generate a CCACCA at the 3' terminus of unstable tRNAs. While stable tRNAs receive only 3'-terminal CCA, unstable tRNAs are marked with CCACCA and rapidly degraded. The polypeptide is CCA-adding enzyme (Geobacillus thermodenitrificans (strain NG80-2)).